Here is a 60-residue protein sequence, read N- to C-terminus: Potassium channel toxin MeuTXKalpha3 (60 aa).

A signal peptide spans 1 to 22 (MKNYCGIITLFLAIISATGVFC). 3 cysteine pairs are disulfide-bonded: C32–C50, C37–C55, and C41–C57. The residue at position 59 (P59) is a Proline amide.

Belongs to the short scorpion toxin superfamily. Potassium channel inhibitor family. In terms of tissue distribution, expressed by the venom gland.

The protein localises to the secreted. In terms of biological role, may block voltage-gated potassium channels (Kv). The protein is Potassium channel toxin MeuTXKalpha3 of Mesobuthus eupeus (Lesser Asian scorpion).